A 494-amino-acid polypeptide reads, in one-letter code: Argininosuccinate synthase, chloroplastic (494 aa).

A chloroplast-targeting transit peptide spans 1-73 (MAEISATSFP…SRSCKNQAIR (73 aa)). Residue Ala-74 is modified to N-acetylalanine. ATP-binding positions include 102–110 (AYSGGLDTS) and Ala-129. L-citrulline is bound by residues Tyr-181 and Ser-186. An ATP-binding site is contributed by Gly-211. Thr-213, Asn-217, and Asp-218 together coordinate L-aspartate. Residue Asn-217 participates in L-citrulline binding. L-citrulline-binding residues include Arg-221, Ser-270, Ser-279, Glu-355, and Tyr-367.

It belongs to the argininosuccinate synthase family. Type 1 subfamily. As to quaternary structure, homotetramer.

The protein resides in the plastid. The protein localises to the chloroplast. It catalyses the reaction L-citrulline + L-aspartate + ATP = 2-(N(omega)-L-arginino)succinate + AMP + diphosphate + H(+). The protein operates within amino-acid biosynthesis; L-arginine biosynthesis; L-arginine from L-ornithine and carbamoyl phosphate: step 2/3. This is Argininosuccinate synthase, chloroplastic from Arabidopsis thaliana (Mouse-ear cress).